We begin with the raw amino-acid sequence, 320 residues long: MRISHTLLNASSKFRTVFDFGERQVAHWFPGHMAKGLKQMRASPRKVDCVIEIHDARIPFSGRNPLFQENLDVRPHLLILNKMDLADTSDKMSILKQLERDGVKNVLLTDCLKQRDTSVKKIIPLVTDLIENAPRFHREENRSYCLMVIGVPNVGKSSLINAIRRTNLKKGKASRVGGEPGITKAVLTKIQVCERPVIHLLDTPGVLPPKIENIETGMKLALCGTILDHLVGEDIIADYLLFSLNRPQRFGYVERYDLETPSDDIQHVLKCIAVKLGKTQRVKAITGVGDITVRMPNYTAAAYDFIRAFRKGELGKVMLD.

A CP-type G domain is found at 37–209 (LKQMRASPRK…LLDTPGVLPP (173 aa)). Residues 81–84 (NKMD), 153–158 (NVGKSS), and Gly205 contribute to the GTP site.

This sequence belongs to the TRAFAC class YlqF/YawG GTPase family. MTG1 subfamily.

The protein localises to the mitochondrion inner membrane. Functionally, plays a role in the regulation of the mitochondrial ribosome assembly and of translational activity. Displays mitochondrial GTPase activity. The chain is Mitochondrial ribosome-associated GTPase 1 from Ictalurus punctatus (Channel catfish).